A 354-amino-acid polypeptide reads, in one-letter code: MAELKNDRYLRALLKQPVDMTPVWMMRQAGRYLPEYKATRAQAGDFMSLCKNHELACEVTLQPLRRYELDAAILFSDILTVPDAMGLGLYFEAGEGPRFERPTDTIDAIKKLAVPDPEDDLGYVMKAVSTIRRELNGQVPLIGFSGSPWTLATYMVEGGSSKTFEKIKKMAYAEPAALHMLLDKLADSVTLYLNAQVANGAQSLMIFDSWGGALSHTAYREFSLRYMQKIVDGLTRFADGRQVPVTLFTKGGGLWLEAMAETGCDALGLDWTVDIADARRRVGHKVALQGNMDPSMLYAPIPRIEEEVAQILAGYGEGTGHVFNLGHGIHQHVDPEHAGAFIKAVHAQSKQYHK.

Substrate contacts are provided by residues 27-31 (RQAGR), D77, Y154, S209, and H327.

Belongs to the uroporphyrinogen decarboxylase family. Homodimer.

The protein resides in the cytoplasm. It carries out the reaction uroporphyrinogen III + 4 H(+) = coproporphyrinogen III + 4 CO2. Its pathway is porphyrin-containing compound metabolism; protoporphyrin-IX biosynthesis; coproporphyrinogen-III from 5-aminolevulinate: step 4/4. In terms of biological role, catalyzes the decarboxylation of four acetate groups of uroporphyrinogen-III to yield coproporphyrinogen-III. This chain is Uroporphyrinogen decarboxylase, found in Shewanella sp. (strain ANA-3).